We begin with the raw amino-acid sequence, 190 residues long: GTP cyclohydrolase 1 (190 aa).

Positions 80, 83, and 151 each coordinate Zn(2+).

The protein belongs to the GTP cyclohydrolase I family. In terms of assembly, toroid-shaped homodecamer, composed of two pentamers of five dimers.

The enzyme catalyses GTP + H2O = 7,8-dihydroneopterin 3'-triphosphate + formate + H(+). It functions in the pathway cofactor biosynthesis; 7,8-dihydroneopterin triphosphate biosynthesis; 7,8-dihydroneopterin triphosphate from GTP: step 1/1. The protein is GTP cyclohydrolase 1 of Rickettsia typhi (strain ATCC VR-144 / Wilmington).